Consider the following 85-residue polypeptide: Putative defensin-like protein 79 (85 aa).

A signal peptide spans 1 to 31; the sequence is MKSEKSADAYGTYFLLISTIFLLFIARQASS. 4 cysteine pairs are disulfide-bonded: C37–C69, C44–C60, C47–C67, and C51–C68.

This sequence belongs to the DEFL family.

The protein resides in the secreted. The polypeptide is Putative defensin-like protein 79 (Arabidopsis thaliana (Mouse-ear cress)).